Here is a 485-residue protein sequence, read N- to C-terminus: Probable L-xylulose kinase (485 aa).

Belongs to the FGGY kinase family. Homodimer.

The enzyme catalyses L-xylulose + ATP = L-xylulose 5-phosphate + ADP + H(+). The protein is Probable L-xylulose kinase (lyx) of Haemophilus influenzae (strain ATCC 51907 / DSM 11121 / KW20 / Rd).